Consider the following 509-residue polypeptide: Citrate synthase 3, peroxisomal (509 aa).

Catalysis depends on residues His319, His358, and Asp414. The tract at residues 485–509 (SKESDKLGQVATSNASRRRLAGSSV) is disordered. Positions 500–509 (SRRRLAGSSV) are enriched in basic residues.

This sequence belongs to the citrate synthase family. In terms of tissue distribution, widely expressed. Expressed throughout the shoot. Expressed in flower, silique, stem, cauline leaf, young leaf, mature leaf and senescent leaf.

Its subcellular location is the peroxisome. The enzyme catalyses oxaloacetate + acetyl-CoA + H2O = citrate + CoA + H(+). It participates in carbohydrate metabolism; tricarboxylic acid cycle; isocitrate from oxaloacetate: step 1/2. Functionally, peroxisomal citrate synthase required for the fatty acid respiration in seedlings, citrate being exported from peroxisomes into mitochondria during respiration of triacylglycerol (TAG). Indeed, complete respiration requires the transfer of carbon in the form of citrate from the peroxisome to the mitochondria. The chain is Citrate synthase 3, peroxisomal (CSY3) from Arabidopsis thaliana (Mouse-ear cress).